The following is a 106-amino-acid chain: UPF0145 protein Daci_3728 (106 aa).

It belongs to the UPF0145 family.

This is UPF0145 protein Daci_3728 from Delftia acidovorans (strain DSM 14801 / SPH-1).